A 171-amino-acid polypeptide reads, in one-letter code: Large ribosomal subunit protein uL10 (171 aa).

Belongs to the universal ribosomal protein uL10 family. Part of the ribosomal stalk of the 50S ribosomal subunit. The N-terminus interacts with L11 and the large rRNA to form the base of the stalk. The C-terminus forms an elongated spine to which L12 dimers bind in a sequential fashion forming a multimeric L10(L12)X complex.

Functionally, forms part of the ribosomal stalk, playing a central role in the interaction of the ribosome with GTP-bound translation factors. This is Large ribosomal subunit protein uL10 from Erythrobacter litoralis (strain HTCC2594).